The primary structure comprises 187 residues: Putative manganese efflux pump MntP (187 aa).

6 helical membrane-spanning segments follow: residues 8–28 (FLSI…GFII), 39–59 (IALF…LTGL), 65–85 (LANF…GKMI), 106–126 (LFAL…GLSV), 131–151 (ILLA…IGVF), and 166–186 (ILGG…GLII).

This sequence belongs to the MntP (TC 9.B.29) family.

It is found in the cell inner membrane. Its function is as follows. Probably functions as a manganese efflux pump. The sequence is that of Putative manganese efflux pump MntP from Rippkaea orientalis (strain PCC 8801 / RF-1) (Cyanothece sp. (strain PCC 8801)).